We begin with the raw amino-acid sequence, 103 residues long: Cytochrome c55X (103 aa).

The N-terminal stretch at M1 to A17 is a signal peptide. Positions 36, 39, and 40 each coordinate heme c.

In terms of processing, binds 1 heme c group covalently per subunit.

The protein resides in the periplasm. Monoheme c-type cytochrome. This Paracoccus denitrificans (strain Pd 1222) protein is Cytochrome c55X (nirC).